A 308-amino-acid chain; its full sequence is MGSRSRILLIGATGYIGRHVAKASLDLGHPTFLLVRESTASSNSEKAQLLESFKASGANIVHGSIDDHASLVEAVKNVDVVISTVGSLQIESQVNIIKAIKEVGTVKRFFPSEFGNDVDNVHAVEPAKSVFEVKAKVRRAIEAEGIPYTYVSSNCFAGYFLRSLAQAGLTAPPRDKVVILGDGNARVVFVKEEDIGTFTIKAVDDPRTLNKTLYLRLPANTLSLNELVALWEKKIDKTLEKAYVPEEEVLKLIADTPFPANISIAISHSIFVKGDQTNFEIGPAGVEASQLYPDVKYTTVDEYLSNFV.

NADP(+) is bound by residues 11–17 (GATGYIG), R36, and K46. Catalysis depends on K134, which acts as the Proton acceptor. R138 is a binding site for NADP(+).

This sequence belongs to the NmrA-type oxidoreductase family. Isoflavone reductase subfamily.

The enzyme catalyses (-)-dehydrodiconiferyl alcohol + NADPH + H(+) = (S)-isodihydrodehydrodiconiferyl alcohol + NADP(+). It catalyses the reaction (+)-dehydrodiconiferyl alcohol + NADPH + H(+) = (R)-isodihydrodehydrodiconiferyl alcohol + NADP(+). It carries out the reaction (2R,3S)-dihydrodehydrodiconiferyl alcohol + NADPH + H(+) = (S)-tetrahydrodehydrodiconiferyl alcohol + NADP(+). The catalysed reaction is (2S,3R)-dihydrodehydrodiconiferyl alcohol + NADPH + H(+) = (R)-tetrahydrodehydrodiconiferyl alcohol + NADP(+). In terms of biological role, oxidoreductase involved in lignan biosynthesis. Catalyzes the NADPH-dependent reduction of phenylcoumaran benzylic ethers. Converts dehydrodiconiferyl alcohol (DDC) to isodihydrodehydrodiconiferyl alcohol (IDDDC), and dihydrodehydrodiconiferyl alcohol (DDDC) to tetrahydrodehydrodiconiferyl alcohol (TDDC). The chain is Phenylcoumaran benzylic ether reductase PT1 from Pinus taeda (Loblolly pine).